The following is a 418-amino-acid chain: Glutamyl-tRNA(Gln) amidotransferase subunit D (418 aa).

In terms of domain architecture, Asparaginase/glutaminase spans 74–405; that stretch reads KNISILSTGG…EDAKELMSKD (332 aa). Active-site residues include Thr-84, Thr-160, Asp-161, and Lys-237.

It belongs to the asparaginase 1 family. GatD subfamily. In terms of assembly, heterodimer of GatD and GatE.

The catalysed reaction is L-glutamyl-tRNA(Gln) + L-glutamine + ATP + H2O = L-glutaminyl-tRNA(Gln) + L-glutamate + ADP + phosphate + H(+). Allows the formation of correctly charged Gln-tRNA(Gln) through the transamidation of misacylated Glu-tRNA(Gln) in organisms which lack glutaminyl-tRNA synthetase. The reaction takes place in the presence of glutamine and ATP through an activated gamma-phospho-Glu-tRNA(Gln). The GatDE system is specific for glutamate and does not act on aspartate. This chain is Glutamyl-tRNA(Gln) amidotransferase subunit D, found in Methanococcus maripaludis (strain C7 / ATCC BAA-1331).